A 449-amino-acid chain; its full sequence is 3-phosphoshikimate 1-carboxyvinyltransferase (449 aa).

K28, S29, and R33 together coordinate 3-phosphoshikimate. Residue K28 coordinates phosphoenolpyruvate. Phosphoenolpyruvate contacts are provided by G105 and R133. Residues S179, Q181, D332, and K359 each contribute to the 3-phosphoshikimate site. Q181 is a phosphoenolpyruvate binding site. The Proton acceptor role is filled by D332. Residues R363 and R406 each contribute to the phosphoenolpyruvate site.

Belongs to the EPSP synthase family. In terms of assembly, monomer.

It localises to the cytoplasm. It catalyses the reaction 3-phosphoshikimate + phosphoenolpyruvate = 5-O-(1-carboxyvinyl)-3-phosphoshikimate + phosphate. The protein operates within metabolic intermediate biosynthesis; chorismate biosynthesis; chorismate from D-erythrose 4-phosphate and phosphoenolpyruvate: step 6/7. Functionally, catalyzes the transfer of the enolpyruvyl moiety of phosphoenolpyruvate (PEP) to the 5-hydroxyl of shikimate-3-phosphate (S3P) to produce enolpyruvyl shikimate-3-phosphate and inorganic phosphate. In Nitrobacter hamburgensis (strain DSM 10229 / NCIMB 13809 / X14), this protein is 3-phosphoshikimate 1-carboxyvinyltransferase.